A 206-amino-acid chain; its full sequence is Recombination protein RecR (206 aa).

The C4-type zinc finger occupies 58–73 (CENCHNISDTKVCEIC). The Toprim domain maps to 81-176 (QTICVVEDIR…IISTIARGIS (96 aa)).

Belongs to the RecR family.

May play a role in DNA repair. It seems to be involved in an RecBC-independent recombinational process of DNA repair. It may act with RecF and RecO. The protein is Recombination protein RecR of Flavobacterium johnsoniae (strain ATCC 17061 / DSM 2064 / JCM 8514 / BCRC 14874 / CCUG 350202 / NBRC 14942 / NCIMB 11054 / UW101) (Cytophaga johnsonae).